The sequence spans 230 residues: Orotidine 5'-phosphate decarboxylase (230 aa).

Residues D12, K34, 61–70 (DMKLLDIDNT), T116, R177, Q186, and R207 contribute to the substrate site. K63 acts as the Proton donor in catalysis.

Belongs to the OMP decarboxylase family. Type 1 subfamily. Homodimer.

It carries out the reaction orotidine 5'-phosphate + H(+) = UMP + CO2. It participates in pyrimidine metabolism; UMP biosynthesis via de novo pathway; UMP from orotate: step 2/2. Its function is as follows. Catalyzes the decarboxylation of orotidine 5'-monophosphate (OMP) to uridine 5'-monophosphate (UMP). The sequence is that of Orotidine 5'-phosphate decarboxylase from Rhizobium rhizogenes (strain K84 / ATCC BAA-868) (Agrobacterium radiobacter).